A 191-amino-acid polypeptide reads, in one-letter code: 3-hydroxyanthranilate 3,4-dioxygenase 2 (191 aa).

Residue arginine 48 coordinates O2. 3 residues coordinate Fe cation: histidine 52, glutamate 73, and histidine 111. Glutamate 73 provides a ligand contact to substrate. Residues arginine 115 and glutamate 125 each contribute to the substrate site.

This sequence belongs to the 3-HAO family. Fe(2+) serves as cofactor.

It is found in the cytoplasm. The catalysed reaction is 3-hydroxyanthranilate + O2 = (2Z,4Z)-2-amino-3-carboxymuconate 6-semialdehyde. It participates in cofactor biosynthesis; NAD(+) biosynthesis; quinolinate from L-kynurenine: step 3/3. In terms of biological role, catalyzes the oxidative ring opening of 3-hydroxyanthranilate to 2-amino-3-carboxymuconate semialdehyde, which spontaneously cyclizes to quinolinate. This chain is 3-hydroxyanthranilate 3,4-dioxygenase 2 (bna1-2), found in Aspergillus clavatus (strain ATCC 1007 / CBS 513.65 / DSM 816 / NCTC 3887 / NRRL 1 / QM 1276 / 107).